Consider the following 177-residue polypeptide: Large ribosomal subunit protein uL6 (177 aa).

Belongs to the universal ribosomal protein uL6 family. As to quaternary structure, part of the 50S ribosomal subunit.

This protein binds to the 23S rRNA, and is important in its secondary structure. It is located near the subunit interface in the base of the L7/L12 stalk, and near the tRNA binding site of the peptidyltransferase center. The chain is Large ribosomal subunit protein uL6 from Roseobacter denitrificans (strain ATCC 33942 / OCh 114) (Erythrobacter sp. (strain OCh 114)).